Here is a 275-residue protein sequence, read N- to C-terminus: Large ribosomal subunit protein uL2 (275 aa).

The segment at 224 to 275 (AMNPVDHPHGGGEAKAGQGNPHPVTPWGVPTKGYKTRKNKRTQQFIVRDRRG) is disordered.

Belongs to the universal ribosomal protein uL2 family. In terms of assembly, part of the 50S ribosomal subunit. Forms a bridge to the 30S subunit in the 70S ribosome.

Its function is as follows. One of the primary rRNA binding proteins. Required for association of the 30S and 50S subunits to form the 70S ribosome, for tRNA binding and peptide bond formation. It has been suggested to have peptidyltransferase activity; this is somewhat controversial. Makes several contacts with the 16S rRNA in the 70S ribosome. The protein is Large ribosomal subunit protein uL2 of Xanthomonas oryzae pv. oryzae (strain MAFF 311018).